A 740-amino-acid chain; its full sequence is ABC transporter G family member 1 (740 aa).

An ABC transporter domain is found at L82–E334. An ATP-binding site is contributed by G127–S134. Positions I434–F644 constitute an ABC transmembrane type-2 domain. 6 helical membrane passes run L453 to W473, F488 to L508, V529 to A549, G563 to L585, L594 to I614, and L713 to L733.

The protein belongs to the ABC transporter superfamily. ABCG family. Eye pigment precursor importer (TC 3.A.1.204) subfamily.

Its subcellular location is the membrane. The protein is ABC transporter G family member 1 (ABCG1) of Arabidopsis thaliana (Mouse-ear cress).